The sequence spans 362 residues: MSFFRCIGRSALFMLDPEHAHRLAIMGLKSGLNSYQKVVDNRLCVTIAGLKFENFIGLAAGFDKNAEVVNDVFHLGFGFTEIGTVTPRPQVGNPKPRLFRLRKDEAIINRMGFNNDGRQIVYGRLHGYKRLGIVGINIGANKDTVDKIDDYITSIAYFYDVADYFTVNISSPNTPGLRDLQVRDSLHLLMNAISQARNEQKKKHGFFVPIFLKIAPDLSEKELDDVAEEMKLSDFDGLIVSNTTLSRQGLRECTLRNEEGGLSGRPLFERSTIVLAKMRQKLGKKIAIIGVGGIRDAKTALEKVKAGADLVQLYSGMVYEGPDLAITILKEILQFMQKDGVESIKAYRDQRVEYWAKHMLSS.

FMN-binding positions include 60–64 and Thr-84; that span reads AGFDK. Position 64 (Lys-64) interacts with substrate. A substrate-binding site is contributed by 109 to 113; the sequence is NRMGF. The FMN site is built by Asn-137 and Asn-168. Residue Asn-168 participates in substrate binding. Ser-171 serves as the catalytic Nucleophile. Asn-173 lines the substrate pocket. Residues Lys-213 and Ser-241 each contribute to the FMN site. 242-243 provides a ligand contact to substrate; sequence NT. Residues Gly-264, Gly-293, and 314 to 315 each bind FMN; that span reads YS.

The protein belongs to the dihydroorotate dehydrogenase family. Type 2 subfamily. Monomer. The cofactor is FMN.

Its subcellular location is the cell membrane. The catalysed reaction is (S)-dihydroorotate + a quinone = orotate + a quinol. Its pathway is pyrimidine metabolism; UMP biosynthesis via de novo pathway; orotate from (S)-dihydroorotate (quinone route): step 1/1. Its function is as follows. Catalyzes the conversion of dihydroorotate to orotate with quinone as electron acceptor. This Bartonella henselae (strain ATCC 49882 / DSM 28221 / CCUG 30454 / Houston 1) (Rochalimaea henselae) protein is Dihydroorotate dehydrogenase (quinone).